Reading from the N-terminus, the 317-residue chain is Aspartate carbamoyltransferase catalytic subunit (317 aa).

Carbamoyl phosphate contacts are provided by arginine 65 and threonine 66. Residue lysine 93 participates in L-aspartate binding. Carbamoyl phosphate-binding residues include arginine 115, histidine 145, and glutamine 148. L-aspartate contacts are provided by arginine 178 and arginine 233. Carbamoyl phosphate is bound by residues glycine 274 and proline 275.

Belongs to the aspartate/ornithine carbamoyltransferase superfamily. ATCase family. Heterododecamer (2C3:3R2) of six catalytic PyrB chains organized as two trimers (C3), and six regulatory PyrI chains organized as three dimers (R2).

The enzyme catalyses carbamoyl phosphate + L-aspartate = N-carbamoyl-L-aspartate + phosphate + H(+). Its pathway is pyrimidine metabolism; UMP biosynthesis via de novo pathway; (S)-dihydroorotate from bicarbonate: step 2/3. Functionally, catalyzes the condensation of carbamoyl phosphate and aspartate to form carbamoyl aspartate and inorganic phosphate, the committed step in the de novo pyrimidine nucleotide biosynthesis pathway. In Methylobacillus flagellatus (strain ATCC 51484 / DSM 6875 / VKM B-1610 / KT), this protein is Aspartate carbamoyltransferase catalytic subunit.